A 68-amino-acid chain; its full sequence is ATP synthase F(0) complex subunit 8 (68 aa).

The helical transmembrane segment at 8 to 24 (TWSITIVSMIITLFIMF) threads the bilayer. Lys-54 carries the N6-acetyllysine; alternate modification. Residue Lys-54 is modified to N6-succinyllysine; alternate. Lys-57 carries the N6-acetyllysine modification.

The protein belongs to the ATPase protein 8 family. In terms of assembly, component of the ATP synthase complex composed at least of ATP5F1A/subunit alpha, ATP5F1B/subunit beta, ATP5MC1/subunit c (homooctomer), MT-ATP6/subunit a, MT-ATP8/subunit 8, ATP5ME/subunit e, ATP5MF/subunit f, ATP5MG/subunit g, ATP5MK/subunit k, ATP5MJ/subunit j, ATP5F1C/subunit gamma, ATP5F1D/subunit delta, ATP5F1E/subunit epsilon, ATP5PF/subunit F6, ATP5PB/subunit b, ATP5PD/subunit d, ATP5PO/subunit OSCP. ATP synthase complex consists of a soluble F(1) head domain (subunits alpha(3) and beta(3)) - the catalytic core - and a membrane F(0) domain - the membrane proton channel (subunits c, a, 8, e, f, g, k and j). These two domains are linked by a central stalk (subunits gamma, delta, and epsilon) rotating inside the F1 region and a stationary peripheral stalk (subunits F6, b, d, and OSCP). Interacts with PRICKLE3.

It localises to the mitochondrion membrane. Subunit 8, of the mitochondrial membrane ATP synthase complex (F(1)F(0) ATP synthase or Complex V) that produces ATP from ADP in the presence of a proton gradient across the membrane which is generated by electron transport complexes of the respiratory chain. ATP synthase complex consist of a soluble F(1) head domain - the catalytic core - and a membrane F(1) domain - the membrane proton channel. These two domains are linked by a central stalk rotating inside the F(1) region and a stationary peripheral stalk. During catalysis, ATP synthesis in the catalytic domain of F(1) is coupled via a rotary mechanism of the central stalk subunits to proton translocation. In vivo, can only synthesize ATP although its ATP hydrolase activity can be activated artificially in vitro. Part of the complex F(0) domain. The polypeptide is ATP synthase F(0) complex subunit 8 (Ceratotherium simum (White rhinoceros)).